The following is a 299-amino-acid chain: 33 kDa chaperonin (299 aa).

2 disulfides stabilise this stretch: Cys239/Cys241 and Cys272/Cys275.

The protein belongs to the HSP33 family. In terms of processing, under oxidizing conditions two disulfide bonds are formed involving the reactive cysteines. Under reducing conditions zinc is bound to the reactive cysteines and the protein is inactive.

It localises to the cytoplasm. In terms of biological role, redox regulated molecular chaperone. Protects both thermally unfolding and oxidatively damaged proteins from irreversible aggregation. Plays an important role in the bacterial defense system toward oxidative stress. The protein is 33 kDa chaperonin of Acaryochloris marina (strain MBIC 11017).